A 158-amino-acid chain; its full sequence is Ribosome-binding factor A (158 aa).

The interval 130–158 (TAQYAGDADPYKHDDEAEAEGDEFESDEE) is disordered. The segment covering 145–158 (EAEAEGDEFESDEE) has biased composition (acidic residues).

The protein belongs to the RbfA family. Monomer. Binds 30S ribosomal subunits, but not 50S ribosomal subunits or 70S ribosomes.

The protein localises to the cytoplasm. Its function is as follows. One of several proteins that assist in the late maturation steps of the functional core of the 30S ribosomal subunit. Associates with free 30S ribosomal subunits (but not with 30S subunits that are part of 70S ribosomes or polysomes). Required for efficient processing of 16S rRNA. May interact with the 5'-terminal helix region of 16S rRNA. The chain is Ribosome-binding factor A from Bifidobacterium longum subsp. infantis (strain ATCC 15697 / DSM 20088 / JCM 1222 / NCTC 11817 / S12).